We begin with the raw amino-acid sequence, 353 residues long: Protein pelota homolog (353 aa).

This sequence belongs to the eukaryotic release factor 1 family. Pelota subfamily. As to quaternary structure, monomer. A divalent metal cation is required as a cofactor.

Its subcellular location is the cytoplasm. Functionally, may function in recognizing stalled ribosomes, interact with stem-loop structures in stalled mRNA molecules, and effect endonucleolytic cleavage of the mRNA. May play a role in the release non-functional ribosomes and degradation of damaged mRNAs. Has endoribonuclease activity. In Methanothermobacter thermautotrophicus (strain ATCC 29096 / DSM 1053 / JCM 10044 / NBRC 100330 / Delta H) (Methanobacterium thermoautotrophicum), this protein is Protein pelota homolog.